A 217-amino-acid chain; its full sequence is N-(5'-phosphoribosyl)anthranilate isomerase (217 aa).

Belongs to the TrpF family.

The catalysed reaction is N-(5-phospho-beta-D-ribosyl)anthranilate = 1-(2-carboxyphenylamino)-1-deoxy-D-ribulose 5-phosphate. It participates in amino-acid biosynthesis; L-tryptophan biosynthesis; L-tryptophan from chorismate: step 3/5. This is N-(5'-phosphoribosyl)anthranilate isomerase from Synechococcus sp. (strain ATCC 27144 / PCC 6301 / SAUG 1402/1) (Anacystis nidulans).